The following is a 486-amino-acid chain: MLFRNIEVGRQAAKLLTRTSSRLAWQSIGASRNISTIRQQIRKTQLYNFKKTVSIRPFSLSSPVFKPHVASESNPIESRLKTSKNVAYWLIGTSGLVFGIVVLGGLTRLTESGLSITEWKPVTGTLPPMNQKEWEEEFIKYKESPEFKLLNSHIDLDEFKFIFFMEWIHRLWGRAIGAVFILPAVYFAVSKKTSGHVNKRLFGLAGLLGLQGFVGWWMVKSGLDQEQLDARKSKPTVSQYRLTTHLGTAFFLYMGMLWTGLEILRECKWIKNPVQAISLFKKLDNPAIGPMRKISLALLAVSFLTAMSGGMVAGLDAGWVYNTWPKMGERWFPSSRELMDENFCRREDKKDLWWRNLLENPVTVQLVHRTCAYVAFTSVLAAHMYAIKKKAVIPRNAMTSLHVMMGVVTLQATLGILTILYLVPISLASIHQAGALALLTSSLVFASQLRKPRAPMRNVIITLPHSSKVTSGKILSEASKLASKPL.

The N-terminal 33 residues, methionine 1–asparagine 33, are a transit peptide targeting the mitochondrion. Topologically, residues isoleucine 34–asparagine 85 are mitochondrial matrix. A helical transmembrane segment spans residues valine 86–leucine 106. Residues threonine 107–arginine 170 are Mitochondrial intermembrane-facing. Histidine 169 is a heme o binding site. Residues leucine 171–lysine 191 traverse the membrane as a helical segment. Residues lysine 192–arginine 200 lie on the Mitochondrial matrix side of the membrane. A helical membrane pass occupies residues leucine 201–serine 221. The Mitochondrial intermembrane portion of the chain corresponds to glycine 222–threonine 243. Residues threonine 244–leucine 264 form a helical membrane-spanning segment. Residue histidine 245 coordinates heme o. At arginine 265–lysine 293 the chain is on the mitochondrial matrix side. The helical transmembrane segment at isoleucine 294–glycine 314 threads the bilayer. Topologically, residues leucine 315–valine 364 are mitochondrial intermembrane. The helical transmembrane segment at glutamine 365 to isoleucine 387 threads the bilayer. Heme b is bound at residue histidine 368. The Mitochondrial matrix portion of the chain corresponds to lysine 388 to histidine 402. Residues valine 403–valine 423 form a helical membrane-spanning segment. Proline 424 is a topological domain (mitochondrial intermembrane). Residues isoleucine 425 to phenylalanine 445 form a helical membrane-spanning segment. Histidine 431 serves as a coordination point for heme b. The Mitochondrial matrix segment spans residues alanine 446–leucine 486.

Belongs to the COX15/CtaA family. Type 2 subfamily. In terms of assembly, forms 200-350 kDa oligomeric complexes independent on heme binding. In addition to form homooligomeric complexes, a portion also associates with the mitochondrial respiratory supercomplexes. Interacts with CcO assembly factors PET117, SHY1, COA3 and COA1, CcO subunit COX13 and cytochrome b-c1 subunit COR1. Requires heme b as cofactor.

It localises to the mitochondrion inner membrane. The catalysed reaction is Fe(II)-heme o + 2 A + H2O = Fe(II)-heme a + 2 AH2. Its pathway is porphyrin-containing compound metabolism; heme A biosynthesis; heme A from heme O: step 1/1. Its function is as follows. Catalyzes the second reaction in the biosynthesis of heme A, a prosthetic group of mitochondrial cytochrome c oxidase (CcO). Heme A is synthesized from heme B by two sequential enzymatic reactions catalyzed by heme O synthase (HOS/COX10) and heme A synthase (HAS/COX15). HAS catalyzes the conversion of heme O to heme A by two successive hydroxylations of the methyl group at C8, in a reaction that involves matrix ferredoxin YAH1 and ferredoxin reductase ARH1. The first hydroxylation forms heme I, the second hydroxylation results in an unstable dihydroxymethyl group, which spontaneously dehydrates, resulting in the formyl group of heme A. May also play a secondary role in CcO assembly. Plays a role in the maturation of COX1, the heme A-containing structural CcO subunit, possibly by interacting with the COX1-containing sub-assembly complexes that form prior to heme A insertion. May also positively regulate the upstream enzymatic reaction, farnesylation of heme B by HOS/COX10. In Saccharomyces cerevisiae (strain ATCC 204508 / S288c) (Baker's yeast), this protein is Heme A synthase COX15.